Reading from the N-terminus, the 815-residue chain is Tubulin polyglutamylase TTLL13 (815 aa).

Residues R85–E430 enclose the TTL domain. Residues K202, Q208–G209, Q230–I233, and K243–D245 each bind ATP. Q208 is a binding site for a protein. An L-glutamate-binding site is contributed by R269. T291–N292 is an ATP binding site. L-glutamate is bound by residues Y293 and K311. Residues D376, E389, and N391 each coordinate Mg(2+). The segment at C401–G482 is c-MTBD region. An L-glutamate-binding site is contributed by K407. Residues A504–T528 are a coiled coil. The interval R520 to Q556 is disordered. Residues A536–R550 are compositionally biased toward basic and acidic residues.

Belongs to the tubulin--tyrosine ligase family. Requires Mg(2+) as cofactor.

It catalyses the reaction (L-glutamyl)(n)-gamma-L-glutamyl-L-glutamyl-[protein] + L-glutamate + ATP = (L-glutamyl)(n+1)-gamma-L-glutamyl-L-glutamyl-[protein] + ADP + phosphate + H(+). Its function is as follows. Polyglutamylase which modifies tubulin, generating polyglutamate side chains of variable lengths on the gamma-carboxyl group of specific glutamate residues within the C-terminal tail of tubulin. Mediates ATP-dependent polyglutamate side-chain elongation of the polyglutamylation reaction but not the initiation step. Preferentially modifies the alpha-tubulin tail over a beta-tail. This chain is Tubulin polyglutamylase TTLL13, found in Homo sapiens (Human).